The following is a 259-amino-acid chain: Thiazole synthase (259 aa).

Residue Lys-95 is the Schiff-base intermediate with DXP of the active site. Residues Gly-156, 182–183, and 204–205 each bind 1-deoxy-D-xylulose 5-phosphate; these read AG and NT.

It belongs to the ThiG family. In terms of assembly, homotetramer. Forms heterodimers with either ThiH or ThiS.

It localises to the cytoplasm. It carries out the reaction [ThiS sulfur-carrier protein]-C-terminal-Gly-aminoethanethioate + 2-iminoacetate + 1-deoxy-D-xylulose 5-phosphate = [ThiS sulfur-carrier protein]-C-terminal Gly-Gly + 2-[(2R,5Z)-2-carboxy-4-methylthiazol-5(2H)-ylidene]ethyl phosphate + 2 H2O + H(+). It participates in cofactor biosynthesis; thiamine diphosphate biosynthesis. Its function is as follows. Catalyzes the rearrangement of 1-deoxy-D-xylulose 5-phosphate (DXP) to produce the thiazole phosphate moiety of thiamine. Sulfur is provided by the thiocarboxylate moiety of the carrier protein ThiS. In vitro, sulfur can be provided by H(2)S. The sequence is that of Thiazole synthase from Proteus mirabilis (strain HI4320).